The chain runs to 181 residues: ATP-dependent protease subunit HslV (181 aa).

Residue threonine 7 is part of the active site. Residues alanine 162, cysteine 165, and threonine 168 each contribute to the Na(+) site.

It belongs to the peptidase T1B family. HslV subfamily. A double ring-shaped homohexamer of HslV is capped on each side by a ring-shaped HslU homohexamer. The assembly of the HslU/HslV complex is dependent on binding of ATP.

It is found in the cytoplasm. It catalyses the reaction ATP-dependent cleavage of peptide bonds with broad specificity.. With respect to regulation, allosterically activated by HslU binding. Functionally, protease subunit of a proteasome-like degradation complex believed to be a general protein degrading machinery. The chain is ATP-dependent protease subunit HslV from Coxiella burnetii (strain RSA 493 / Nine Mile phase I).